We begin with the raw amino-acid sequence, 815 residues long: Protein-glutamine gamma-glutamyltransferase K (815 aa).

Disordered regions lie at residues 1-40 (MDGP…RRGG) and 59-100 (DDWG…AAGD). Pro residues predominate over residues 16-25 (WQPPTTPSPE). Residue Thr-21 is modified to Phosphothreonine. Ser-23, Ser-80, Ser-83, Ser-90, and Ser-93 each carry phosphoserine. Residues 59–87 (DDWGPEPHRDRGSGSGRRRPDSRGSDSRR) show a composition bias toward basic and acidic residues. Catalysis depends on residues Cys-375, His-434, and Asp-457. Ca(2+)-binding residues include Asn-497, Asp-499, Glu-546, and Glu-551. A disordered region spans residues 795–815 (SNAGGNSPLGETIPMASRGGA).

This sequence belongs to the transglutaminase superfamily. Transglutaminase family. Interacts with PLAAT4. It depends on Ca(2+) as a cofactor. Post-translationally, palmitoylated. The membrane anchorage region possesses a cluster of five cysteines within which fatty acid(s) may become thioester-linked. It is subject to phorbol ester-stimulated phosphorylation and is hypersensitive to proteolysis, which releases the enzyme in a soluble form. In terms of processing, tyrosine-phosphorylated.

Its subcellular location is the membrane. It carries out the reaction L-glutaminyl-[protein] + L-lysyl-[protein] = [protein]-L-lysyl-N(6)-5-L-glutamyl-[protein] + NH4(+). Its function is as follows. Catalyzes the cross-linking of proteins and the conjugation of polyamines to proteins. Responsible for cross-linking epidermal proteins during formation of the stratum corneum. Involved in cell proliferation. The protein is Protein-glutamine gamma-glutamyltransferase K (TGM1) of Canis lupus familiaris (Dog).